Consider the following 236-residue polypeptide: uncharacterized protein (236 aa).

A disordered region spans residues 1-73 (MEPGGSENAA…GGGWGWGNTQ (73 aa)).

This is an uncharacterized protein from Homo sapiens (Human).